Consider the following 252-residue polypeptide: Enolase-phosphatase E1 (252 aa).

Mg(2+) is bound by residues Asp14 and Glu16. Residues 143–144 (SS) and Lys177 contribute to the substrate site. Asp202 serves as a coordination point for Mg(2+).

Belongs to the HAD-like hydrolase superfamily. MasA/MtnC family. As to quaternary structure, monomer. Mg(2+) serves as cofactor.

It localises to the cytoplasm. It is found in the nucleus. The catalysed reaction is 5-methylsulfanyl-2,3-dioxopentyl phosphate + H2O = 1,2-dihydroxy-5-(methylsulfanyl)pent-1-en-3-one + phosphate. The protein operates within amino-acid biosynthesis; L-methionine biosynthesis via salvage pathway; L-methionine from S-methyl-5-thio-alpha-D-ribose 1-phosphate: step 3/6. Its pathway is amino-acid biosynthesis; L-methionine biosynthesis via salvage pathway; L-methionine from S-methyl-5-thio-alpha-D-ribose 1-phosphate: step 4/6. Bifunctional enzyme that catalyzes the enolization of 2,3-diketo-5-methylthiopentyl-1-phosphate (DK-MTP-1-P) into the intermediate 2-hydroxy-3-keto-5-methylthiopentenyl-1-phosphate (HK-MTPenyl-1-P), which is then dephosphorylated to form the acireductone 1,2-dihydroxy-3-keto-5-methylthiopentene (DHK-MTPene). The polypeptide is Enolase-phosphatase E1 (Drosophila pseudoobscura pseudoobscura (Fruit fly)).